A 60-amino-acid chain; its full sequence is Ribosome modulation factor (60 aa).

It belongs to the ribosome modulation factor family.

The protein localises to the cytoplasm. Its function is as follows. During stationary phase, converts 70S ribosomes to an inactive dimeric form (100S ribosomes). This is Ribosome modulation factor from Kangiella koreensis (strain DSM 16069 / JCM 12317 / KCTC 12182 / SW-125).